The sequence spans 228 residues: uncharacterized protein (228 aa).

The first 19 residues, 1–19, serve as a signal peptide directing secretion; it reads MYRYTWLLWWITILLRIQQ. Residues N41, N93, N100, N128, and N164 are each glycosylated (N-linked (GlcNAc...) asparagine; by host). A helical membrane pass occupies residues 189–209; the sequence is MWIIPLVIVTTIIVLICFKFP.

The protein belongs to the HHV-5 UL9 family.

It is found in the host membrane. This is an uncharacterized protein from Homo sapiens (Human).